The sequence spans 539 residues: Peptide chain release factor 3 (539 aa).

One can recognise a tr-type G domain in the interval 14 to 283; sequence EKRRNFAIIS…AFLEYALQPE (270 aa). GTP-binding positions include 23–30, 91–95, and 145–148; these read SHPDAGKT, DTPGH, and NKLD.

The protein belongs to the TRAFAC class translation factor GTPase superfamily. Classic translation factor GTPase family. PrfC subfamily.

It is found in the cytoplasm. Functionally, increases the formation of ribosomal termination complexes and stimulates activities of RF-1 and RF-2. It binds guanine nucleotides and has strong preference for UGA stop codons. It may interact directly with the ribosome. The stimulation of RF-1 and RF-2 is significantly reduced by GTP and GDP, but not by GMP. The sequence is that of Peptide chain release factor 3 from Rippkaea orientalis (strain PCC 8801 / RF-1) (Cyanothece sp. (strain PCC 8801)).